Reading from the N-terminus, the 315-residue chain is Cytoplasmic dynein intermediate light chain DYN3 (315 aa).

Belongs to the dynein light intermediate chain DYN3 family. As to quaternary structure, the cytoplasmic dynein is composed of at least two heavy chains and a number of intermediate and light chains.

The protein resides in the cytoplasm. The protein localises to the cytoskeleton. In terms of biological role, component of the cytoplasmic dynein which acts as a motor for the intracellular retrograde motility of vesicles and organelles along microtubules. May play an important role in the proper orientation of the mitotic spindle into the budding daughter cell yeast. Probably required for normal progression of the cell cycle. This is Cytoplasmic dynein intermediate light chain DYN3 (DYN3) from Candida glabrata (strain ATCC 2001 / BCRC 20586 / JCM 3761 / NBRC 0622 / NRRL Y-65 / CBS 138) (Yeast).